Consider the following 150-residue polypeptide: MKVILTADVAKLGNRGTLVEVSEGYARNYLLPRGLAVEATAGRLKELDLEKKRREKKENQELENARRQAARLDGAVVKITTRAGETGKLFGSVTNKEIAEAIKNTFQISLDRRKIDLKEPIKALGSYEVTLKLHPTVQAHLRVQVVAEGS.

It belongs to the bacterial ribosomal protein bL9 family.

Its function is as follows. Binds to the 23S rRNA. The polypeptide is Large ribosomal subunit protein bL9 (Moorella thermoacetica (strain ATCC 39073 / JCM 9320)).